Consider the following 189-residue polypeptide: Xanthine phosphoribosyltransferase (189 aa).

Xanthine contacts are provided by L20 and N27. 127–131 (AYGNA) is a binding site for 5-phospho-alpha-D-ribose 1-diphosphate. K155 contacts xanthine.

The protein belongs to the purine/pyrimidine phosphoribosyltransferase family. Xpt subfamily. As to quaternary structure, homodimer.

It localises to the cytoplasm. The catalysed reaction is XMP + diphosphate = xanthine + 5-phospho-alpha-D-ribose 1-diphosphate. It participates in purine metabolism; XMP biosynthesis via salvage pathway; XMP from xanthine: step 1/1. In terms of biological role, converts the preformed base xanthine, a product of nucleic acid breakdown, to xanthosine 5'-monophosphate (XMP), so it can be reused for RNA or DNA synthesis. This Bacteroides fragilis (strain ATCC 25285 / DSM 2151 / CCUG 4856 / JCM 11019 / LMG 10263 / NCTC 9343 / Onslow / VPI 2553 / EN-2) protein is Xanthine phosphoribosyltransferase.